The chain runs to 172 residues: Translationally-controlled tumor protein homolog (172 aa).

The TCTP domain occupies 1–172 (MKIYKDIITG…FKHGLDEEKC (172 aa)).

The protein belongs to the TCTP family.

It is found in the cytoplasm. In terms of biological role, involved in calcium binding and microtubule stabilization. The chain is Translationally-controlled tumor protein homolog from Drosophila yakuba (Fruit fly).